A 318-amino-acid chain; its full sequence is Ribokinase (318 aa).

Residues 11–13 (NTD), 41–45 (GKGAN), and E146 each bind substrate. Residues N190 and 229-234 (TLGSQG) contribute to the ATP site. The K(+) site is built by D256 and T258. ATP is bound at residue 261–262 (GD). Residue D262 participates in substrate binding. The active-site Proton acceptor is the D262. The K(+) site is built by T292, R295, G297, and S301.

The protein belongs to the carbohydrate kinase PfkB family. Ribokinase subfamily. As to quaternary structure, homodimer. Mg(2+) serves as cofactor.

The protein localises to the cytoplasm. It localises to the nucleus. The enzyme catalyses D-ribose + ATP = D-ribose 5-phosphate + ADP + H(+). Its pathway is carbohydrate metabolism; D-ribose degradation; D-ribose 5-phosphate from beta-D-ribopyranose: step 2/2. Activated by a monovalent cation that binds near, but not in, the active site. The most likely occupant of the site in vivo is potassium. Ion binding induces a conformational change that may alter substrate affinity. In terms of biological role, catalyzes the phosphorylation of ribose at O-5 in a reaction requiring ATP and magnesium. The resulting D-ribose-5-phosphate can then be used either for sythesis of nucleotides, histidine, and tryptophan, or as a component of the pentose phosphate pathway. This chain is Ribokinase, found in Schizosaccharomyces pombe (strain 972 / ATCC 24843) (Fission yeast).